An 870-amino-acid chain; its full sequence is DNA topoisomerase 1 (870 aa).

The region spanning 1–128 (MKSPRFRHSQ…RVYKSSFEAA (128 aa)) is the Toprim domain. The 436-residue stretch at 143–578 (YDGLAYSAKA…QTNAFVQKIT (436 aa)) folds into the Topo IA-type catalytic domain. The interval 180–185 (SSGRVQ) is interaction with DNA. Tyr299 acts as the O-(5'-phospho-DNA)-tyrosine intermediate in catalysis. 3 C4-type zinc fingers span residues 603–627 (CQCP…HPNC), 693–717 (CPKC…QNGC), and 784–807 (CPLC…KRGC).

Belongs to the type IA topoisomerase family. In terms of assembly, monomer.

The catalysed reaction is ATP-independent breakage of single-stranded DNA, followed by passage and rejoining.. Its function is as follows. Releases the supercoiling and torsional tension of DNA, which is introduced during the DNA replication and transcription, by transiently cleaving and rejoining one strand of the DNA duplex. Introduces a single-strand break via transesterification at a target site in duplex DNA. The scissile phosphodiester is attacked by the catalytic tyrosine of the enzyme, resulting in the formation of a DNA-(5'-phosphotyrosyl)-enzyme intermediate and the expulsion of a 3'-OH DNA strand. The free DNA strand then undergoes passage around the unbroken strand, thus removing DNA supercoils. Finally, in the religation step, the DNA 3'-OH attacks the covalent intermediate to expel the active-site tyrosine and restore the DNA phosphodiester backbone. This Bacillus anthracis protein is DNA topoisomerase 1 (topX).